Reading from the N-terminus, the 40-residue chain is Biotin carboxylase (40 aa).

The region spanning 1 to 40 is the Biotin carboxylation domain; sequence ILVANRGEIAVRLLEEAPSPALTPELRITAYLPSGGPFVR. The ATP-grasp domain occupies 13-27; it reads LLEEAPSPALTPELR.

As to quaternary structure, acetyl-CoA carboxylase is a heterohexamer of biotin carboxyl carrier protein, biotin carboxylase and the two subunits of carboxyl transferase in a 2:2 complex. The cofactor is Mg(2+). Requires Mn(2+) as cofactor.

It catalyses the reaction N(6)-biotinyl-L-lysyl-[protein] + hydrogencarbonate + ATP = N(6)-carboxybiotinyl-L-lysyl-[protein] + ADP + phosphate + H(+). Its pathway is lipid metabolism; malonyl-CoA biosynthesis; malonyl-CoA from acetyl-CoA: step 1/1. In terms of biological role, this protein is a component of the acetyl coenzyme A carboxylase complex; first, biotin carboxylase catalyzes the carboxylation of the carrier protein and then the transcarboxylase transfers the carboxyl group to form malonyl-CoA. The sequence is that of Biotin carboxylase from Populus euphratica (Euphrates poplar).